Consider the following 240-residue polypeptide: Ribonuclease 3 (240 aa).

Residues 13–143 (DHASLLEALG…LLGAVHLQHG (131 aa)) form the RNase III domain. Glutamate 53 contacts Mg(2+). The active site involves aspartate 57. Residues aspartate 129 and glutamate 132 each coordinate Mg(2+). Residue glutamate 132 is part of the active site. A DRBM domain is found at 170 to 238 (DWKTSLQELT…AGAAYQALTA (69 aa)).

Belongs to the ribonuclease III family. As to quaternary structure, homodimer. The cofactor is Mg(2+).

It localises to the cytoplasm. It carries out the reaction Endonucleolytic cleavage to 5'-phosphomonoester.. Its function is as follows. Digests double-stranded RNA. Involved in the processing of primary rRNA transcript to yield the immediate precursors to the large and small rRNAs (23S and 16S). Processes some mRNAs, and tRNAs when they are encoded in the rRNA operon. Processes pre-crRNA and tracrRNA of type II CRISPR loci if present in the organism. The polypeptide is Ribonuclease 3 (Nocardia farcinica (strain IFM 10152)).